The sequence spans 409 residues: Pyrophosphate--fructose 6-phosphate 1-phosphotransferase (409 aa).

Gly14 contributes to the diphosphate binding site. Asp123 lines the Mg(2+) pocket. Substrate-binding positions include 151–153, 196–198, Glu268, and 325–328; these read TID, MGR, and YFAR. Residue Asp153 is the Proton acceptor of the active site.

The protein belongs to the phosphofructokinase type A (PFKA) family. PPi-dependent PFK group II subfamily. Clade 'P' sub-subfamily. Homotetramer. Mg(2+) serves as cofactor.

It localises to the cytoplasm. The catalysed reaction is beta-D-fructose 6-phosphate + diphosphate = beta-D-fructose 1,6-bisphosphate + phosphate + H(+). It functions in the pathway carbohydrate degradation; glycolysis; D-glyceraldehyde 3-phosphate and glycerone phosphate from D-glucose: step 3/4. Its activity is regulated as follows. Non-allosteric. Functionally, catalyzes the phosphorylation of D-fructose 6-phosphate, the first committing step of glycolysis. Uses inorganic phosphate (PPi) as phosphoryl donor instead of ATP like common ATP-dependent phosphofructokinases (ATP-PFKs), which renders the reaction reversible, and can thus function both in glycolysis and gluconeogenesis. Consistently, PPi-PFK can replace the enzymes of both the forward (ATP-PFK) and reverse (fructose-bisphosphatase (FBPase)) reactions. This Methylotuvimicrobium alcaliphilum (strain DSM 19304 / NCIMB 14124 / VKM B-2133 / 20Z) (Methylomicrobium alcaliphilum) protein is Pyrophosphate--fructose 6-phosphate 1-phosphotransferase.